The chain runs to 298 residues: Cyclin-dependent kinase 1 (298 aa).

Ser-2 is modified (N-acetylserine). Residues Tyr-8–Phe-295 enclose the Protein kinase domain. ATP-binding positions include Val-14–Val-22 and Lys-40. Residue Tyr-19 is modified to Phosphotyrosine. The Proton acceptor role is filled by Asp-136. A Phosphothreonine modification is found at Thr-169.

It belongs to the protein kinase superfamily. CMGC Ser/Thr protein kinase family. CDC2/CDKX subfamily. As to quaternary structure, forms a stable but non-covalent complex with the CKS1 protein and with a cyclin.

It catalyses the reaction L-seryl-[protein] + ATP = O-phospho-L-seryl-[protein] + ADP + H(+). The enzyme catalyses L-threonyl-[protein] + ATP = O-phospho-L-threonyl-[protein] + ADP + H(+). Its activity is regulated as follows. Phosphorylation at Thr-18 or Tyr-19 inactivates the enzyme, while phosphorylation at Thr-169 activates it. Functionally, cyclin-dependent kinase that acts as a master regulator of the mitotic and meiotic cell cycles. Required to drive the G1-S transition. More than 200 substrates have been identified. Substrate specificity is in part regulated by the bound cyclin protein. Phosphorylates YTA7 during S-phase to promote transcription of histones. May phosphorylate CNN1, to contribute to the enrichment of CNN1 on anaphase kinetochores. The protein is Cyclin-dependent kinase 1 of Saccharomyces cerevisiae (strain ATCC 204508 / S288c) (Baker's yeast).